The sequence spans 1401 residues: DNA-directed RNA polymerase subunit beta' (1401 aa).

Cysteine 71, cysteine 73, cysteine 86, and cysteine 89 together coordinate Zn(2+). Mg(2+) is bound by residues aspartate 462, aspartate 464, and aspartate 466. Cysteine 810, cysteine 884, cysteine 891, and cysteine 894 together coordinate Zn(2+). The tract at residues 1377–1401 is disordered; that stretch reads RRKGTGAESATPMLADMANDPAAAE.

This sequence belongs to the RNA polymerase beta' chain family. The RNAP catalytic core consists of 2 alpha, 1 beta, 1 beta' and 1 omega subunit. When a sigma factor is associated with the core the holoenzyme is formed, which can initiate transcription. Mg(2+) serves as cofactor. It depends on Zn(2+) as a cofactor.

The catalysed reaction is RNA(n) + a ribonucleoside 5'-triphosphate = RNA(n+1) + diphosphate. Functionally, DNA-dependent RNA polymerase catalyzes the transcription of DNA into RNA using the four ribonucleoside triphosphates as substrates. The chain is DNA-directed RNA polymerase subunit beta' from Rhizobium meliloti (strain 1021) (Ensifer meliloti).